Here is a 1033-residue protein sequence, read N- to C-terminus: Calcium-transporting ATPase 12, plasma membrane-type (1033 aa).

Met-1 bears the N-acetylmethionine mark. The Cytoplasmic segment spans residues 1 to 152; it reads MRDLKEYDYS…NTYHKPPPKG (152 aa). The interaction with calmodulin stretch occupies residues 25-36; that stretch reads QRRWRFAYAAIY. Ser-37 is modified (phosphoserine). A helical transmembrane segment spans residues 153-173; it reads LLFFVYEAFKDLTILILLVCA. The Lumenal portion of the chain corresponds to 174-191; it reads IFSLGFGIKEHGIKEGWY. The helical transmembrane segment at 192 to 212 threads the bilayer; sequence EGGSIFVAVFLVIVVSALSNF. Residues 213–341 lie on the Cytoplasmic side of the membrane; that stretch reads RQERQFDKLS…SERTPLQVRL (129 aa). A helical membrane pass occupies residues 342-361; that stretch reads DTLTSTIGKIGLTVAALVLV. The Lumenal segment spans residues 362 to 397; that stretch reads VLLVRYFTGNTEKEGKREYNGSKTPVDTVVNSVVRI. The chain crosses the membrane as a helical span at residues 398–415; that stretch reads VAAAVTIVVVAIPEGLPL. Residues 416-806 are Cytoplasmic-facing; the sequence is AVTLTLAYSM…KWGRCVYNNI (391 aa). Asp-453 (4-aspartylphosphate intermediate) is an active-site residue. The Mg(2+) site is built by Asp-751 and Asp-755. The chain crosses the membrane as a helical span at residues 807–825; the sequence is QKFIQFQLTVNVAALVINF. Over 826-836 the chain is Lumenal; the sequence is IAAISAGEVPL. Residues 837-857 form a helical membrane-spanning segment; that stretch reads TAVQLLWVNLIMDTLGALALA. Over 858 to 877 the chain is Cytoplasmic; that stretch reads TERPTNELLKRKPVGRTEAL. The helical transmembrane segment at 878 to 900 threads the bilayer; it reads ITNVMWRNLLVQSLYQIAVLLIL. The Lumenal segment spans residues 901-909; that stretch reads QFKGMSIFS. A helical membrane pass occupies residues 910–930; that stretch reads VRKEVKDTLIFNTFVLCQVFN. The Cytoplasmic portion of the chain corresponds to 931 to 948; the sequence is EFNAREMEKKNVFKGLHR. Residues 949 to 970 traverse the membrane as a helical segment; it reads NRLFIGIIAITIVLQVIMVEFL. Residues 971 to 980 are Lumenal-facing; it reads KKFADTVRLN. Residues 981 to 1002 form a helical membrane-spanning segment; that stretch reads GWQWGTCIALASLSWPIGFFTK. Topologically, residues 1003–1006 are cytoplasmic; sequence FIPV.

This sequence belongs to the cation transport ATPase (P-type) (TC 3.A.3) family. Type IIB subfamily.

Its subcellular location is the membrane. The enzyme catalyses Ca(2+)(in) + ATP + H2O = Ca(2+)(out) + ADP + phosphate + H(+). With respect to regulation, activated by calmodulin. Functionally, this magnesium-dependent enzyme catalyzes the hydrolysis of ATP coupled with the translocation of calcium from the cytosol out of the cell or into organelles. This is Calcium-transporting ATPase 12, plasma membrane-type (ACA12) from Arabidopsis thaliana (Mouse-ear cress).